We begin with the raw amino-acid sequence, 226 residues long: Large ribosomal subunit protein uL1 (226 aa).

The protein belongs to the universal ribosomal protein uL1 family. As to quaternary structure, part of the 50S ribosomal subunit.

Functionally, binds directly to 23S rRNA. The L1 stalk is quite mobile in the ribosome, and is involved in E site tRNA release. Protein L1 is also a translational repressor protein, it controls the translation of the L11 operon by binding to its mRNA. This is Large ribosomal subunit protein uL1 from Borrelia garinii subsp. bavariensis (strain ATCC BAA-2496 / DSM 23469 / PBi) (Borreliella bavariensis).